The chain runs to 339 residues: UDP-3-O-acylglucosamine N-acyltransferase (339 aa).

His251 acts as the Proton acceptor in catalysis.

This sequence belongs to the transferase hexapeptide repeat family. LpxD subfamily. As to quaternary structure, homotrimer.

It catalyses the reaction a UDP-3-O-[(3R)-3-hydroxyacyl]-alpha-D-glucosamine + a (3R)-hydroxyacyl-[ACP] = a UDP-2-N,3-O-bis[(3R)-3-hydroxyacyl]-alpha-D-glucosamine + holo-[ACP] + H(+). Its pathway is bacterial outer membrane biogenesis; LPS lipid A biosynthesis. Functionally, catalyzes the N-acylation of UDP-3-O-acylglucosamine using 3-hydroxyacyl-ACP as the acyl donor. Is involved in the biosynthesis of lipid A, a phosphorylated glycolipid that anchors the lipopolysaccharide to the outer membrane of the cell. The polypeptide is UDP-3-O-acylglucosamine N-acyltransferase (Paramagnetospirillum magneticum (strain ATCC 700264 / AMB-1) (Magnetospirillum magneticum)).